The chain runs to 235 residues: Small ribosomal subunit protein uS3 (235 aa).

The 69-residue stretch at 39-107 (VRKFLNKELA…PAQINIAEVK (69 aa)) folds into the KH type-2 domain.

Belongs to the universal ribosomal protein uS3 family. Part of the 30S ribosomal subunit. Forms a tight complex with proteins S10 and S14.

In terms of biological role, binds the lower part of the 30S subunit head. Binds mRNA in the 70S ribosome, positioning it for translation. The protein is Small ribosomal subunit protein uS3 of Mannheimia succiniciproducens (strain KCTC 0769BP / MBEL55E).